A 451-amino-acid polypeptide reads, in one-letter code: Cobalamin reductase PduS (451 aa).

4Fe-4S ferredoxin-type domains are found at residues 255–284 (TVLS…HELS) and 300–330 (PQLL…MRIN). Positions 264, 267, 270, 274, 309, 312, 315, and 320 each coordinate [4Fe-4S] cluster.

It belongs to the PduS cobalamin reductase family. As to quaternary structure, monomeric when purified anaerobically, dimeric under aerobic conditions. Forms a complex with PduO. Interacts with PduT, probably via the N-terminus of PduS. It depends on [4Fe-4S] cluster as a cofactor. FMN is required as a cofactor.

It is found in the bacterial microcompartment. The protein operates within polyol metabolism; 1,2-propanediol degradation. Functionally, a protein that aids in conversion of cob(III)alamin to cob(II)alamin and then to cob(I)alamin in the bacterial microcompartment (BMC) dedicated to 1,2-propanediol (1,2-PD) degradation. The latter step requires PduO. No free cob(I)alamin is released, suggesting a complex is formed with PduO that finishes conversion to adenosylcobalamin. PduS and PduO allow regeneration of the adenosylcobalamin cofactor within the BMC. Another study showed reduction of cob(II)alamin to cob(I)alamin in the absence of PduO. Both reactions require NADH. Cyanocobalamin (CN-Cbl) is not a substrate for the first reaction. Cobalamin reduction probably occurs spontaneously in the presence of free reduced flavin nucleotides, this protein may be involved in electron transfer for this reduction. Its function is as follows. The 1,2-PD-specific bacterial microcompartment (BMC) concentrates low levels of 1,2-PD catabolic enzymes, concentrates volatile reaction intermediates thus enhancing pathway flux and keeps the level of toxic, mutagenic propionaldehyde low. This chain is Cobalamin reductase PduS, found in Salmonella typhimurium (strain LT2 / SGSC1412 / ATCC 700720).